A 207-amino-acid chain; its full sequence is Pyridoxine/pyridoxamine 5'-phosphate oxidase (207 aa).

FMN-binding positions include 53 to 58 (RMVLLK), 68 to 69 (YT), lysine 75, and glutamine 97. A substrate-binding site is contributed by lysine 58. Substrate-binding residues include tyrosine 115, arginine 119, and serine 123. FMN contacts are provided by residues 132-133 (QS) and tryptophan 177. 183–185 (RLH) is a substrate binding site. Arginine 187 serves as a coordination point for FMN.

It belongs to the pyridoxamine 5'-phosphate oxidase family. In terms of assembly, homodimer. Requires FMN as cofactor.

It catalyses the reaction pyridoxamine 5'-phosphate + O2 + H2O = pyridoxal 5'-phosphate + H2O2 + NH4(+). The catalysed reaction is pyridoxine 5'-phosphate + O2 = pyridoxal 5'-phosphate + H2O2. It functions in the pathway cofactor metabolism; pyridoxal 5'-phosphate salvage; pyridoxal 5'-phosphate from pyridoxamine 5'-phosphate: step 1/1. It participates in cofactor metabolism; pyridoxal 5'-phosphate salvage; pyridoxal 5'-phosphate from pyridoxine 5'-phosphate: step 1/1. In terms of biological role, catalyzes the oxidation of either pyridoxine 5'-phosphate (PNP) or pyridoxamine 5'-phosphate (PMP) into pyridoxal 5'-phosphate (PLP). The chain is Pyridoxine/pyridoxamine 5'-phosphate oxidase from Bartonella henselae (strain ATCC 49882 / DSM 28221 / CCUG 30454 / Houston 1) (Rochalimaea henselae).